The sequence spans 249 residues: DNA polymerase sliding clamp (249 aa).

This sequence belongs to the PCNA family. As to quaternary structure, homotrimer. The subunits circularize to form a toroid; DNA passes through its center. Replication factor C (RFC) is required to load the toroid on the DNA.

In terms of biological role, sliding clamp subunit that acts as a moving platform for DNA processing. Responsible for tethering the catalytic subunit of DNA polymerase and other proteins to DNA during high-speed replication. In Nanoarchaeum equitans (strain Kin4-M), this protein is DNA polymerase sliding clamp.